Here is a 103-residue protein sequence, read N- to C-terminus: Large ribosomal subunit protein bL21 (103 aa).

Belongs to the bacterial ribosomal protein bL21 family. As to quaternary structure, part of the 50S ribosomal subunit. Contacts protein L20.

In terms of biological role, this protein binds to 23S rRNA in the presence of protein L20. The protein is Large ribosomal subunit protein bL21 of Nitrosospira multiformis (strain ATCC 25196 / NCIMB 11849 / C 71).